The following is a 412-amino-acid chain: [Pyruvate dehydrogenase (acetyl-transferring)] kinase isozyme 4, mitochondrial (412 aa).

The Histidine kinase domain maps to 138-368; it reads IIEYKDSCTV…DAIIYLKALS (231 aa). Residues 254–261, Asp293, 312–313, and 329–334 contribute to the ATP site; these read ELFKNAMR, ST, and GFGYGL.

The protein belongs to the PDK/BCKDK protein kinase family. Homodimer. Interacts with the pyruvate dehydrogenase complex subunit DLAT, and is part of the multimeric pyruvate dehydrogenase complex that contains multiple copies of pyruvate dehydrogenase (E1), dihydrolipoamide acetyltransferase (DLAT, E2) and lipoamide dehydrogenase (DLD, E3). In terms of tissue distribution, detected in heart, white adipose tissue and muscle.

It localises to the mitochondrion matrix. The catalysed reaction is L-seryl-[pyruvate dehydrogenase E1 alpha subunit] + ATP = O-phospho-L-seryl-[pyruvate dehydrogenase E1 alpha subunit] + ADP + H(+). In terms of biological role, kinase that plays a key role in regulation of glucose and fatty acid metabolism and homeostasis via phosphorylation of the pyruvate dehydrogenase subunits PDHA1 and PDHA2. This inhibits pyruvate dehydrogenase activity, and thereby regulates metabolite flux through the tricarboxylic acid cycle, down-regulates aerobic respiration and inhibits the formation of acetyl-coenzyme A from pyruvate. Inhibition of pyruvate dehydrogenase decreases glucose utilization and increases fat metabolism in response to prolonged fasting and starvation. Plays an important role in maintaining normal blood glucose levels under starvation, and is involved in the insulin signaling cascade. Via its regulation of pyruvate dehydrogenase activity, plays an important role in maintaining normal blood pH and in preventing the accumulation of ketone bodies under starvation. In the fed state, mediates cellular responses to glucose levels and to a high-fat diet. Regulates both fatty acid oxidation and de novo fatty acid biosynthesis. Plays a role in the generation of reactive oxygen species. Protects detached epithelial cells against anoikis. Plays a role in cell proliferation via its role in regulating carbohydrate and fatty acid metabolism. In Rhinolophus ferrumequinum (Greater horseshoe bat), this protein is [Pyruvate dehydrogenase (acetyl-transferring)] kinase isozyme 4, mitochondrial (PDK4).